The following is a 63-amino-acid chain: Period circadian protein (63 aa).

Residues 1 to 63 (EGSGGSGSSG…VTLTESLLNK (63 aa)) are disordered. Low complexity-rich tracts occupy residues 9–31 (SGNF…NAGT) and 39–49 (SAAASGASVNA). The span at 54–63 (VTLTESLLNK) shows a compositional bias: polar residues.

As to quaternary structure, forms a heterodimer with timeless (TIM); the complex then translocates into the nucleus. Phosphorylated with a circadian rhythmicity, probably by the double-time protein (dbt). Phosphorylation could be implicated in the stability of per monomer and in the formation of heterodimer per-tim.

It localises to the nucleus. It is found in the cytoplasm. The protein resides in the perinuclear region. Functionally, essential for biological clock functions. Determines the period length of circadian and ultradian rhythms; an increase in PER dosage leads to shortened circadian rhythms and a decrease leads to lengthened circadian rhythms. Essential for the circadian rhythmicity of locomotor activity, eclosion behavior, and for the rhythmic component of the male courtship song that originates in the thoracic nervous system. The biological cycle depends on the rhythmic formation and nuclear localization of the TIM-PER complex. Light induces the degradation of TIM, which promotes elimination of PER. Nuclear activity of the heterodimer coordinatively regulates PER and TIM transcription through a negative feedback loop. Behaves as a negative element in circadian transcriptional loop. Does not appear to bind DNA, suggesting indirect transcriptional inhibition. The protein is Period circadian protein (per) of Drosophila immigrans (Fruit fly).